The sequence spans 248 residues: GTP cyclohydrolase 1 type 2 homolog (248 aa).

The a divalent metal cation site is built by H64, H65, D101, H216, and E220.

It belongs to the GTP cyclohydrolase I type 2/NIF3 family. As to quaternary structure, homohexamer.

This Borreliella burgdorferi (strain ATCC 35210 / DSM 4680 / CIP 102532 / B31) (Borrelia burgdorferi) protein is GTP cyclohydrolase 1 type 2 homolog.